An 88-amino-acid polypeptide reads, in one-letter code: Small ribosomal subunit protein uS17 (88 aa).

This sequence belongs to the universal ribosomal protein uS17 family. In terms of assembly, part of the 30S ribosomal subunit.

Its function is as follows. One of the primary rRNA binding proteins, it binds specifically to the 5'-end of 16S ribosomal RNA. This chain is Small ribosomal subunit protein uS17, found in Prochlorococcus marinus (strain SARG / CCMP1375 / SS120).